The primary structure comprises 419 residues: GTPase Obg (419 aa).

Residues 1–158 enclose the Obg domain; sequence MIFIDTAEII…RRLRLELKLV (158 aa). Positions 159-328 constitute an OBG-type G domain; sequence AHVGLVGLPN…LVDVLFELIS (170 aa). GTP is bound by residues 165-172, 190-194, 211-214, 281-284, and 309-311; these read GLPNAGKS, FTTRS, DVPG, NKID, and SAA. Mg(2+) contacts are provided by Ser172 and Thr192. Residues 344–419 form the OCT domain; that stretch reads ELPPLPEDFS…VIHDKAFEIL (76 aa).

The protein belongs to the TRAFAC class OBG-HflX-like GTPase superfamily. OBG GTPase family. In terms of assembly, monomer. The cofactor is Mg(2+).

It localises to the cytoplasm. An essential GTPase which binds GTP, GDP and possibly (p)ppGpp with moderate affinity, with high nucleotide exchange rates and a fairly low GTP hydrolysis rate. Plays a role in control of the cell cycle, stress response, ribosome biogenesis and in those bacteria that undergo differentiation, in morphogenesis control. The sequence is that of GTPase Obg from Coprothermobacter proteolyticus (strain ATCC 35245 / DSM 5265 / OCM 4 / BT).